A 247-amino-acid polypeptide reads, in one-letter code: Phosphate import ATP-binding protein PstB (247 aa).

The ABC transporter domain occupies 2 to 242 (CRDVNVYYGE…PRHPLTEDYI (241 aa)). 32-39 (GPSGCGKS) is a binding site for ATP.

This sequence belongs to the ABC transporter superfamily. Phosphate importer (TC 3.A.1.7) family. In terms of assembly, the complex is composed of two ATP-binding proteins (PstB), two transmembrane proteins (PstC and PstA) and a solute-binding protein (PstS).

Its subcellular location is the cell inner membrane. The enzyme catalyses phosphate(out) + ATP + H2O = ADP + 2 phosphate(in) + H(+). Its function is as follows. Part of the ABC transporter complex PstSACB involved in phosphate import. Responsible for energy coupling to the transport system. This is Phosphate import ATP-binding protein PstB from Methylococcus capsulatus (strain ATCC 33009 / NCIMB 11132 / Bath).